The chain runs to 486 residues: MRILEIFAILLILKEVRPQTKRSHKVNMKTPFQKRKNHHLNTDSRATLMSPADLHSVEHSIVQIRDPTLIPHYDQKSQEDMKLHFLKNTLVTCNDGTTAGYYLRETKGSKRWIIFLEGGWCCYSKETCGVRYDNVKRLMSSSNWPQTRKGTGILSPRQDENPYWWNVNAVFVPYCSSDVWSGNVSKTQDGYAFMGSVIIQEVIRDLVPRGMKQAKSVILAGSSAGGTGVLINIDRVAALVEETTSESVQVRGLVDSGWFLDSRHSKQSDCLDISKCALTEAIKKGLKLWNGILPENCKQQFKKGDEWRCFYGPRLFTSMKSPIFVVQWLYDQEQLRIENIQTEFQSMTENQWNSIQNIGREFKKSLREVPAVFAPACLSHTLITKSNWLEFQVKSVTLAKALHCWDRSLQENRAPKGVIRGCPFHLVDNCQWPHCNPTCPAIYDATSGQELSILQMFLKLRLESQRRGQEPKGDLGPLMSMLRNSG.

Residues 1–18 (MRILEIFAILLILKEVRP) form the signal peptide. N-linked (GlcNAc...) asparagine glycosylation occurs at Asn-183. Active-site charge relay system residues include Ser-223, Asp-331, and His-380.

The protein belongs to the pectinacetylesterase family. Notum subfamily.

It is found in the secreted. It carries out the reaction [Wnt protein]-O-(9Z)-hexadecenoyl-L-serine + H2O = [Wnt protein]-L-serine + (9Z)-hexadecenoate + H(+). Carboxylesterase that acts as a key negative regulator of the Wnt signaling pathway by specifically mediating depalmitoleoylation of WNT proteins. Serine palmitoleoylation of WNT proteins is required for efficient binding to frizzled receptors. The sequence is that of Palmitoleoyl-protein carboxylesterase notum2 from Xenopus laevis (African clawed frog).